The primary structure comprises 326 residues: Microtubule-associated protein RP/EB family member 2 (326 aa).

Phosphoserine is present on Ser-9. Residues 56–158 (TMSRHDIIAW…FIQWFKKFYD (103 aa)) enclose the Calponin-homology (CH) domain. A Phosphotyrosine modification is found at Tyr-166. 2 disordered regions span residues 170–239 (EARQ…DKDL) and 297–326 (YASDEQEGQTEEPEVEEQTHDQQPQQQEEY). Positions 186 to 326 (QIFNLPKKSH…DQQPQQQEEY (141 aa)) are DCTN1-binding. Residues 199 to 233 (SPTAGAAKSSPAAKPGSTPSRPSSAKRASSSGSAS) show a composition bias toward low complexity. A phosphoserine mark is found at Ser-218 and Ser-235. The 71-residue stretch at 235–305 (SDKDLETQVI…LYASDEQEGQ (71 aa)) folds into the EB1 C-terminal domain. Residues 258–301 (EGVEKERDFYFGKLREIELLCQEHGQENDDLVQRLMEVLYASDE) form an APC-binding region. A compositionally biased stretch (acidic residues) spans 300–312 (DEQEGQTEEPEVE). A compositionally biased stretch (low complexity) spans 317–326 (DQQPQQQEEY).

The protein belongs to the MAPRE family. Interacts with DCTN1. Interacts with APC (via C-terminal). Interacts with monomeric and polymerized tubulin. Interacts with SLAIN1. Interacts (via the N-terminal region) with BAG1. Interacts with ASB14. Interacts with HAX1; this interaction is essential for epidermal cell migration. In terms of processing, phosphorylated at Ser-235 by CK2 leading to enhanced cell adhesion. Phosphorylated by CDK1 and AURKB during mitosis reduces the binding affinity of MAPRE2 for microtubules. Post-translationally, ubiquitinated in an ASB14-dependent manner; leading to proteasomal degradation.

The protein resides in the cytoplasm. The protein localises to the cytoskeleton. Functionally, adapter protein that is involved in microtubule polymerization, and spindle function by stabilizing microtubules and anchoring them at centrosomes. Therefore, ensures mitotic progression and genome stability. Acts as a central regulator of microtubule reorganization in apico-basal epithelial differentiation. Plays a role during oocyte meiosis by regulating microtubule dynamics. Participates in neurite growth by interacting with plexin B3/PLXNB3 and microtubule reorganization during apico-basal epithelial differentiation. Also plays an essential role for cell migration and focal adhesion dynamics. Mechanistically, recruits HAX1 to microtubules in order to regulate focal adhesion dynamics. The protein is Microtubule-associated protein RP/EB family member 2 (Mapre2) of Rattus norvegicus (Rat).